Reading from the N-terminus, the 469-residue chain is ATP-dependent protease ATPase subunit HslU (469 aa).

ATP is bound by residues Ile24, 66–71 (GVGKTE), Asp282, Glu347, and Arg419.

The protein belongs to the ClpX chaperone family. HslU subfamily. A double ring-shaped homohexamer of HslV is capped on each side by a ring-shaped HslU homohexamer. The assembly of the HslU/HslV complex is dependent on binding of ATP.

The protein localises to the cytoplasm. In terms of biological role, ATPase subunit of a proteasome-like degradation complex; this subunit has chaperone activity. The binding of ATP and its subsequent hydrolysis by HslU are essential for unfolding of protein substrates subsequently hydrolyzed by HslV. HslU recognizes the N-terminal part of its protein substrates and unfolds these before they are guided to HslV for hydrolysis. This chain is ATP-dependent protease ATPase subunit HslU, found in Listeria monocytogenes serotype 4a (strain HCC23).